A 265-amino-acid chain; its full sequence is Hydroxyethylthiazole kinase (265 aa).

Met55 contributes to the substrate binding site. The ATP site is built by Arg130 and Ser176. Gly203 is a binding site for substrate.

This sequence belongs to the Thz kinase family. The cofactor is Mg(2+).

The enzyme catalyses 5-(2-hydroxyethyl)-4-methylthiazole + ATP = 4-methyl-5-(2-phosphooxyethyl)-thiazole + ADP + H(+). It functions in the pathway cofactor biosynthesis; thiamine diphosphate biosynthesis; 4-methyl-5-(2-phosphoethyl)-thiazole from 5-(2-hydroxyethyl)-4-methylthiazole: step 1/1. Functionally, catalyzes the phosphorylation of the hydroxyl group of 4-methyl-5-beta-hydroxyethylthiazole (THZ). This chain is Hydroxyethylthiazole kinase, found in Leptospira interrogans serogroup Icterohaemorrhagiae serovar copenhageni (strain Fiocruz L1-130).